Reading from the N-terminus, the 76-residue chain is Toxin Acra III-1 (76 aa).

Residues 4–67 (PGNYPLDTRG…IWDAVKNHCT (64 aa)) form the LCN-type CS-alpha/beta domain. 3 cysteine pairs are disulfide-bonded: cysteine 18–cysteine 41, cysteine 27–cysteine 46, and cysteine 31–cysteine 48.

It belongs to the long (3 C-C) scorpion toxin superfamily. Sodium channel inhibitor family. Beta subfamily. In terms of tissue distribution, expressed by the venom gland.

Its subcellular location is the secreted. Its function is as follows. Binds to sodium channels (Nav) and affects the channel activation process. The polypeptide is Toxin Acra III-1 (Androctonus crassicauda (Arabian fat-tailed scorpion)).